A 438-amino-acid chain; its full sequence is Indole diterpene prenyltransferase paxD (438 aa).

An L-tryptophan-binding site is contributed by 80-81 (FM). Positions 102, 190, 264, 266, 268, 349, and 418 each coordinate substrate.

Belongs to the tryptophan dimethylallyltransferase family.

The protein operates within secondary metabolite biosynthesis. Indole diterpene prenyltransferase; part of the gene cluster that mediates the biosynthesis of paxilline, a mycotoxin that acts as an inhibitor of mammalian maxi-K channels. PaxG, the geranylgeranyl diphosphate (GGPP) synthase is proposed to catalyze the first step in paxilline biosynthesis. Condensation of indole-3-glycerol phosphate with GGPP by paxC then forms 3-geranylgeranylindole (3-GGI), followed by epoxidation and cyclization of this intermediate (by paxM and paxB) to form paspaline. Paspaline is subsequently converted to 13-desoxypaxilline by paxP, the latter being then converted to paxilline by paxQ. Finally paxilline can be mono- and di-prenylated by paxD. The polypeptide is Indole diterpene prenyltransferase paxD (Penicillium paxilli).